Here is a 697-residue protein sequence, read N- to C-terminus: uncharacterized protein (697 aa).

Transmembrane regions (helical) follow at residues 65 to 85 (PVRN…VGIY), 106 to 126 (CTFR…LHNF), 131 to 151 (YRQS…EKAI), 163 to 183 (DAAL…DINE), 194 to 214 (LSSY…VPLG), 227 to 247 (TSAT…TASI), 286 to 306 (STNA…ANKD), 316 to 336 (PVTD…VLLE), 361 to 381 (SDEI…PEGV), 394 to 414 (MFEL…MAWE), 419 to 439 (ERML…EPYH), 450 to 470 (SVKR…YLAI), 487 to 507 (QGSQ…YKVW), and 558 to 578 (TSAG…HHRQ). The tract at residues 246–321 (SINVRTSATT…NRFHPVTDIN (76 aa)) is disordered. A compositionally biased stretch (low complexity) spans 251–298 (TSATTTESTNSNTNATTTESTNSSTNATTTASTNSSTNATTTESTNAS). Residues 299–321 (AKEDANKDGNAEDNRFHPVTDIN) show a composition bias toward basic and acidic residues.

Its subcellular location is the membrane. This is an uncharacterized protein from Saccharomyces cerevisiae (strain ATCC 204508 / S288c) (Baker's yeast).